The sequence spans 144 residues: Large ribosomal subunit protein uL11 (144 aa).

It belongs to the universal ribosomal protein uL11 family. In terms of assembly, part of the ribosomal stalk of the 50S ribosomal subunit. Interacts with L10 and the large rRNA to form the base of the stalk. L10 forms an elongated spine to which L12 dimers bind in a sequential fashion forming a multimeric L10(L12)X complex. Post-translationally, one or more lysine residues are methylated.

In terms of biological role, forms part of the ribosomal stalk which helps the ribosome interact with GTP-bound translation factors. This chain is Large ribosomal subunit protein uL11, found in Neisseria meningitidis serogroup C (strain 053442).